Reading from the N-terminus, the 1122-residue chain is Protein CAF130 (1122 aa).

The interval 1-24 (MTKKKAATNYAERQNLASEDSSGD) is disordered. A compositionally biased stretch (polar residues) spans 11–24 (AERQNLASEDSSGD). Ser1042 carries the phosphoserine modification.

Subunit of the 1.0 MDa CCR4-NOT core complex that contains CCR4, CAF1, NOT1, NOT2, NOT3, NOT4, NOT5, CAF40 and CAF130. In the complex interacts with NOT1. The core complex probably is part of a less characterized 1.9 MDa CCR4-NOT complex.

The protein localises to the cytoplasm. It localises to the nucleus. In terms of biological role, acts as a component of the CCR4-NOT core complex, which in the nucleus seems to be a general transcription factor, and in the cytoplasm the major mRNA deadenylase involved in mRNA turnover. This Saccharomyces cerevisiae (strain ATCC 204508 / S288c) (Baker's yeast) protein is Protein CAF130 (CAF130).